Consider the following 542-residue polypeptide: MKMMASRKSLWVLLFIVIFWISFTVFRNPVKLWAVFKLPASFNQWDLIMKSSCPKVPLNPSVSPTETELRIREILEKLNKQIPPRPFAHLNNTTSATHSIATILNPQDTYCVGDQLDILVEARDHLRNRKGYGGDFLRARMSSPALKAGASGKVTDFNNGTYLVSFTLFWEGQVSLSILLMHPSEGVSALWRARNQGYDRIIFSGHFVSGASQVHTDCALVLNSSVELCQYLDAQDQEAFYCVKPPNVPCAAITHMHSKNKDISYLSQQERSLFERSNIAVEIMGKSNVISVSKCNKAVPVKKKCKFGMASAIPTGHVWKNTWNPASCSLAPIKMKDCLRGKLVHLMGDSTMRQWMEYFKSKINTLRPVDLHETGRLQHQLAVDLDEKINIQWQKHGFPLIGSLVYSVKEIENTARIIDRIGGEKNTVIVFSLGQHFRPFPIDVFIRRALSVHRALQRLLLRSPDTLVVLKTENTRELNNDMERFSDFHGYTQYLALKNIFQDLRVGVIDAWDMTVAYGTNDVHPPEEVVRSEINIFLNYIC.

Residues 1–26 form the signal peptide; that stretch reads MKMMASRKSLWVLLFIVIFWISFTVF. N-linked (GlcNAc...) asparagine glycans are attached at residues N91, N92, N159, and N223.

It belongs to the NXPE family.

The protein localises to the secreted. In Rattus norvegicus (Rat), this protein is NXPE family member 4 (Nxpe4).